A 301-amino-acid chain; its full sequence is Pantothenate synthetase (301 aa).

30 to 37 (MGNLHEGH) provides a ligand contact to ATP. The active-site Proton donor is the His37. Gln61 serves as a coordination point for (R)-pantoate. Gln61 lines the beta-alanine pocket. 149–152 (GEKD) contacts ATP. Gln155 serves as a coordination point for (R)-pantoate. Residues Val178 and 186–189 (MSSR) contribute to the ATP site.

The protein belongs to the pantothenate synthetase family. As to quaternary structure, homodimer.

Its subcellular location is the cytoplasm. The catalysed reaction is (R)-pantoate + beta-alanine + ATP = (R)-pantothenate + AMP + diphosphate + H(+). The protein operates within cofactor biosynthesis; (R)-pantothenate biosynthesis; (R)-pantothenate from (R)-pantoate and beta-alanine: step 1/1. Its function is as follows. Catalyzes the condensation of pantoate with beta-alanine in an ATP-dependent reaction via a pantoyl-adenylate intermediate. In Vibrio vulnificus (strain YJ016), this protein is Pantothenate synthetase.